Consider the following 188-residue polypeptide: dCTP deaminase (188 aa).

DCTP-binding positions include 111–116, 135–137, Gln-156, Tyr-170, Lys-179, and Gln-180; these read KSTYAR and TLE. The active-site Proton donor/acceptor is the Glu-137.

It belongs to the dCTP deaminase family. In terms of assembly, homotrimer.

It catalyses the reaction dCTP + H2O + H(+) = dUTP + NH4(+). The protein operates within pyrimidine metabolism; dUMP biosynthesis; dUMP from dCTP (dUTP route): step 1/2. Catalyzes the deamination of dCTP to dUTP. This is dCTP deaminase from Rickettsia bellii (strain OSU 85-389).